Consider the following 344-residue polypeptide: N-acetyl-gamma-glutamyl-phosphate reductase 1 (344 aa).

The active site involves Cys-150.

This sequence belongs to the NAGSA dehydrogenase family. Type 1 subfamily.

The protein resides in the cytoplasm. It catalyses the reaction N-acetyl-L-glutamate 5-semialdehyde + phosphate + NADP(+) = N-acetyl-L-glutamyl 5-phosphate + NADPH + H(+). It participates in amino-acid biosynthesis; L-arginine biosynthesis; N(2)-acetyl-L-ornithine from L-glutamate: step 3/4. Functionally, catalyzes the NADPH-dependent reduction of N-acetyl-5-glutamyl phosphate to yield N-acetyl-L-glutamate 5-semialdehyde. This is N-acetyl-gamma-glutamyl-phosphate reductase 1 from Pseudomonas putida (strain ATCC 47054 / DSM 6125 / CFBP 8728 / NCIMB 11950 / KT2440).